Reading from the N-terminus, the 255-residue chain is Sec-independent protein translocase protein TatC (255 aa).

A run of 7 helical transmembrane segments spans residues 28–48 (VAAVLLIFAALFYFAQDIYAL), 56–76 (YLPEGATMIATGVASPFLAPF), 80–100 (LMISLFLAMPVVLHQVWGFIA), 121–141 (LFYAGMAFAYFVVFPIMFGFF), 165–185 (LFFAFGVAFEVPVATFLLIWV), 195–212 (NSRPYVIVGCFVVGMVLT), and 216–236 (VFSQTLLAVPMWLLFEIGVFF).

The protein belongs to the TatC family. The Tat system comprises two distinct complexes: a TatABC complex, containing multiple copies of TatA, TatB and TatC subunits, and a separate TatA complex, containing only TatA subunits. Substrates initially bind to the TatABC complex, which probably triggers association of the separate TatA complex to form the active translocon.

The protein localises to the cell membrane. Its function is as follows. Part of the twin-arginine translocation (Tat) system that transports large folded proteins containing a characteristic twin-arginine motif in their signal peptide across membranes. Together with TatB, TatC is part of a receptor directly interacting with Tat signal peptides. The sequence is that of Sec-independent protein translocase protein TatC from Azotobacter chroococcum mcd 1.